The following is a 400-amino-acid chain: Egl nine homolog 1 (400 aa).

Residue alanine 2 is modified to N-acetylalanine. The interval 6-20 is required for nuclear export; that stretch reads GGPGVLSASERDRQY. Serine 12 bears the Phosphoserine mark. The Zn(2+) site is built by cysteine 21, cysteine 24, cysteine 33, cysteine 36, cysteine 42, histidine 46, histidine 54, and cysteine 58. An MYND-type; atypical zinc finger spans residues 21-58; it reads CELCGKMENLLRCGRCRSSFYCCKEHQRQDWKKHKLVC. Positions 62-74 are enriched in low complexity; sequence EAPRAQPAPAQPR. The interval 62–161 is disordered; the sequence is EAPRAQPAPA…PGGGLRPNGQ (100 aa). Position 114 is a phosphoserine (serine 114). The segment covering 142–157 has biased composition (gly residues); it reads AGGGPGEALSPGGGLR. 2 positions are modified to S-nitrosocysteine: cysteine 178 and cysteine 185. The beta(2)beta(3) 'finger-like' loop stretch occupies residues 218-228; the sequence is VSQKSDSSKDI. The 99-residue stretch at 271 to 369 folds into the Fe2OG dioxygenase domain; the sequence is GRTKAMVACY…RYAITVWYFD (99 aa). At cysteine 279 the chain carries S-nitrosocysteine. Fe cation-binding residues include histidine 290 and aspartate 292. An S-nitrosocysteine mark is found at cysteine 300 and cysteine 303. Histidine 351 is a Fe cation binding site. Arginine 360 contributes to the 2-oxoglutarate binding site.

As to quaternary structure, monomer. Interacts with ING4; the interaction inhibits the hydroxylation of HIF alpha proteins. Interacts with PTGES3 (via PXLE motif); thereby recruiting EGLN1 to the HSP90 pathway to facilitate HIF alpha proteins hydroxylation. Interacts with LIMD1. Found in a complex composed of LIMD1, VHL, EGLN1/PHD2, ELOB and CUL2. Interacts with EPAS1. Interacts with CBFA2T3 and HIF1A. Fe(2+) serves as cofactor. Requires L-ascorbate as cofactor. Post-translationally, S-nitrosylation inhibits the enzyme activity up to 60% under aerobic conditions. Chelation of Fe(2+) has no effect on the S-nitrosylation. It is uncertain whether nitrosylation occurs on Cys-300 or Cys-303. In terms of tissue distribution, expressed in heart, brain liver, skeletal muscle and kidney. Low levels were detected in the lung. Constitutively expressed during differentiation of C2C12 skeletal myocytes.

The protein resides in the cytoplasm. The protein localises to the nucleus. The enzyme catalyses L-prolyl-[hypoxia-inducible factor alpha subunit] + 2-oxoglutarate + O2 = trans-4-hydroxy-L-prolyl-[hypoxia-inducible factor alpha subunit] + succinate + CO2. Cellular oxygen sensor that catalyzes, under normoxic conditions, the post-translational formation of 4-hydroxyproline in hypoxia-inducible factor (HIF) alpha proteins. Hydroxylates a specific proline found in each of the oxygen-dependent degradation (ODD) domains (N-terminal, NODD, and C-terminal, CODD) of HIF1A. Also hydroxylates HIF2A. Has a preference for the CODD site for both HIF1A and HIF1B. Hydroxylated HIFs are then targeted for proteasomal degradation via the von Hippel-Lindau ubiquitination complex. Under hypoxic conditions, the hydroxylation reaction is attenuated allowing HIFs to escape degradation resulting in their translocation to the nucleus, heterodimerization with HIF1B, and increased expression of hypoxy-inducible genes. EGLN1 is the most important isozyme under normoxia and, through regulating the stability of HIF1, involved in various hypoxia-influenced processes such as angiogenesis in retinal and cardiac functionality. Target proteins are preferentially recognized via a LXXLAP motif. This is Egl nine homolog 1 (Egln1) from Mus musculus (Mouse).